We begin with the raw amino-acid sequence, 384 residues long: S-adenosylmethionine synthase (384 aa).

His15 contributes to the ATP binding site. Asp17 lines the Mg(2+) pocket. Glu43 contacts K(+). L-methionine contacts are provided by Glu56 and Gln99. Residues Gln99–Lys109 form a flexible loop region. Residues Asp164–Lys166, Arg230–Phe231, Asp239, Arg245–Lys246, Ala262, and Lys266 contribute to the ATP site. Asp239 lines the L-methionine pocket. Lys270 lines the L-methionine pocket.

It belongs to the AdoMet synthase family. Homotetramer; dimer of dimers. It depends on Mg(2+) as a cofactor. Requires K(+) as cofactor.

The protein resides in the cytoplasm. It carries out the reaction L-methionine + ATP + H2O = S-adenosyl-L-methionine + phosphate + diphosphate. It participates in amino-acid biosynthesis; S-adenosyl-L-methionine biosynthesis; S-adenosyl-L-methionine from L-methionine: step 1/1. Catalyzes the formation of S-adenosylmethionine (AdoMet) from methionine and ATP. The overall synthetic reaction is composed of two sequential steps, AdoMet formation and the subsequent tripolyphosphate hydrolysis which occurs prior to release of AdoMet from the enzyme. This chain is S-adenosylmethionine synthase, found in Aliivibrio salmonicida (strain LFI1238) (Vibrio salmonicida (strain LFI1238)).